Reading from the N-terminus, the 827-residue chain is Valine--tRNA ligase (827 aa).

Residues 41-51 (PNVTGQLHLGH) carry the 'HIGH' region motif. Positions 511 to 515 (KMTKS) match the 'KMSKS' region motif. Lys514 is an ATP binding site. Residues 765–827 (ENLSKEKAQK…KELLDEKIIE (63 aa)) adopt a coiled-coil conformation.

The protein belongs to the class-I aminoacyl-tRNA synthetase family. ValS type 1 subfamily. In terms of assembly, monomer.

The protein localises to the cytoplasm. The enzyme catalyses tRNA(Val) + L-valine + ATP = L-valyl-tRNA(Val) + AMP + diphosphate. In terms of biological role, catalyzes the attachment of valine to tRNA(Val). As ValRS can inadvertently accommodate and process structurally similar amino acids such as threonine, to avoid such errors, it has a 'posttransfer' editing activity that hydrolyzes mischarged Thr-tRNA(Val) in a tRNA-dependent manner. This Mycoplasmopsis pulmonis (strain UAB CTIP) (Mycoplasma pulmonis) protein is Valine--tRNA ligase.